The sequence spans 236 residues: uncharacterized protein (236 aa).

Transmembrane regions (helical) follow at residues 32–52 (MALA…VEPI), 61–81 (FGTI…MGFG), 90–110 (ILFW…ALIY), 115–135 (IART…YGYS), 144–164 (GSFF…NLFL), 167–187 (SSLS…LIAW), and 208–228 (LSIM…LYLM).

This sequence belongs to the BI1 family.

The protein localises to the cell membrane. This is an uncharacterized protein from Rickettsia prowazekii (strain Madrid E).